Consider the following 143-residue polypeptide: Peptide methionine sulfoxide reductase MsrB (143 aa).

The region spanning Asp16 to Lys139 is the MsrB domain. Zn(2+) contacts are provided by Cys55, Cys58, Cys104, and Cys107. Cys128 serves as the catalytic Nucleophile.

This sequence belongs to the MsrB Met sulfoxide reductase family. Zn(2+) is required as a cofactor.

The enzyme catalyses L-methionyl-[protein] + [thioredoxin]-disulfide + H2O = L-methionyl-(R)-S-oxide-[protein] + [thioredoxin]-dithiol. The chain is Peptide methionine sulfoxide reductase MsrB from Burkholderia pseudomallei (strain 1710b).